Reading from the N-terminus, the 316-residue chain is Olfactory receptor 2G6 (316 aa).

At 1 to 25 (MEETNNSSEKGFLLLGFSDQPQLER) the chain is on the extracellular side. Residues Asn-5 and Asn-6 are each glycosylated (N-linked (GlcNAc...) asparagine). A helical membrane pass occupies residues 26 to 49 (FLFAIILYFYVLSLLGNTALILVC). The Cytoplasmic portion of the chain corresponds to 50-57 (CLDSRLHT). A helical membrane pass occupies residues 58–79 (PMYFFLSNLSCVDICFTTSVAP). At 80–100 (QLLVTMNKKDKTMSYGGCVAQ) the chain is on the extracellular side. An intrachain disulfide couples Cys-97 to Cys-189. The chain crosses the membrane as a helical span at residues 101–120 (LYVAMGLGSSECILLAVMAY). Residues 121–139 (DRYAAVCRPLRYIAIMHPR) lie on the Cytoplasmic side of the membrane. The chain crosses the membrane as a helical span at residues 140-158 (FCASLAGGAWLSGLITSLI). The Extracellular portion of the chain corresponds to 159–195 (QCSLTVQLPLCGHRTLDHIFCEVPVLIKLACVDTTFN). A helical membrane pass occupies residues 196 to 219 (EAELFVASVVFLIVPVLLILVSYG). Residues 220–236 (FITQAVLRIKSAAGRQK) lie on the Cytoplasmic side of the membrane. The chain crosses the membrane as a helical span at residues 237–259 (AFGTCSSHLVVVIIFYGTIIFMY). Over 260-272 (LQPANRRSKNQGK) the chain is Extracellular. Residues 273–292 (FVSLFYTIVTPLLNPIIYTL) form a helical membrane-spanning segment. The Cytoplasmic segment spans residues 293–316 (RNKDVKGALRTLILGSAAGQSHKD).

Belongs to the G-protein coupled receptor 1 family.

Its subcellular location is the cell membrane. Functionally, odorant receptor. The polypeptide is Olfactory receptor 2G6 (OR2G6) (Homo sapiens (Human)).